The following is a 256-amino-acid chain: Pimeloyl-[acyl-carrier protein] methyl ester esterase (256 aa).

Positions 15-242 (HLVLLHGWGL…AAHAPFISHP (228 aa)) constitute an AB hydrolase-1 domain. Residues W22, 82–83 (SL), and 143–147 (FLALQ) each bind substrate. S82 acts as the Nucleophile in catalysis. Residues D207 and H235 contribute to the active site. H235 is a binding site for substrate.

It belongs to the AB hydrolase superfamily. Carboxylesterase BioH family. As to quaternary structure, monomer.

It is found in the cytoplasm. The enzyme catalyses 6-carboxyhexanoyl-[ACP] methyl ester + H2O = 6-carboxyhexanoyl-[ACP] + methanol + H(+). Its pathway is cofactor biosynthesis; biotin biosynthesis. Its function is as follows. The physiological role of BioH is to remove the methyl group introduced by BioC when the pimeloyl moiety is complete. It allows to synthesize pimeloyl-ACP via the fatty acid synthetic pathway through the hydrolysis of the ester bonds of pimeloyl-ACP esters. The polypeptide is Pimeloyl-[acyl-carrier protein] methyl ester esterase (Escherichia coli (strain 55989 / EAEC)).